Consider the following 323-residue polypeptide: GTP 3',8-cyclase (323 aa).

A Radical SAM core domain is found at 4–226; that stretch reads TFQRQINYLR…LEPFPDLATN (223 aa). Arg-13 contacts GTP. Residues Cys-20 and Cys-24 each contribute to the [4Fe-4S] cluster site. Tyr-26 lines the S-adenosyl-L-methionine pocket. Cys-27 provides a ligand contact to [4Fe-4S] cluster. Arg-63 is a GTP binding site. Gly-67 lines the S-adenosyl-L-methionine pocket. Thr-94 contributes to the GTP binding site. S-adenosyl-L-methionine is bound at residue Ser-118. Lys-155 contacts GTP. An S-adenosyl-L-methionine-binding site is contributed by Met-189. 2 residues coordinate [4Fe-4S] cluster: Cys-252 and Cys-255. 257-259 contributes to the GTP binding site; sequence RLR. Cys-269 is a binding site for [4Fe-4S] cluster.

It belongs to the radical SAM superfamily. MoaA family. As to quaternary structure, monomer and homodimer. The cofactor is [4Fe-4S] cluster.

The enzyme catalyses GTP + AH2 + S-adenosyl-L-methionine = (8S)-3',8-cyclo-7,8-dihydroguanosine 5'-triphosphate + 5'-deoxyadenosine + L-methionine + A + H(+). The protein operates within cofactor biosynthesis; molybdopterin biosynthesis. Catalyzes the cyclization of GTP to (8S)-3',8-cyclo-7,8-dihydroguanosine 5'-triphosphate. The protein is GTP 3',8-cyclase of Moorella thermoacetica (strain ATCC 39073 / JCM 9320).